A 217-amino-acid chain; its full sequence is Cytidylate kinase (217 aa).

Gly-10–Thr-18 serves as a coordination point for ATP.

Belongs to the cytidylate kinase family. Type 1 subfamily.

The protein resides in the cytoplasm. The catalysed reaction is CMP + ATP = CDP + ADP. The enzyme catalyses dCMP + ATP = dCDP + ADP. The sequence is that of Cytidylate kinase from Clostridium botulinum (strain ATCC 19397 / Type A).